A 494-amino-acid chain; its full sequence is Solute carrier family 2, facilitated glucose transporter member 3 (494 aa).

The Cytoplasmic segment spans residues 1 to 10 (MGTTKVTAPL). A helical membrane pass occupies residues 11-32 (IFAISVATIGSFQFGYNTGVIN). Residues 33–64 (APEAIIKDFLNYTLEERSEPPPSSVLLTSLWS) lie on the Extracellular side of the membrane. Asn-43 carries an N-linked (GlcNAc...) asparagine glycan. Residues 65 to 85 (LSVAIFSVGGMIGSFSVGLFV) form a helical membrane-spanning segment. Residues 86-90 (NRFGR) lie on the Cytoplasmic side of the membrane. The chain crosses the membrane as a helical span at residues 91 to 111 (GNSMLIVNLLAIAGGCLMGFC). Residues 112-118 (KIAESVE) are Extracellular-facing. The chain crosses the membrane as a helical span at residues 119–142 (MLILGRLIIGLFCGLCTGFVPMYI). At 143–153 (GEISPTALRGA) the chain is on the cytoplasmic side. The chain crosses the membrane as a helical span at residues 154 to 174 (FGTLNQLGIVIGILVAQIFGL). Gln-159 contributes to the D-glucose binding site. Residues 175–183 (KVILGTEDL) lie on the Extracellular side of the membrane. A helical membrane pass occupies residues 184 to 204 (WPLLLGFTILPAIIQCAALPF). Residues 205–269 (CPESPRFLLI…LFRAPNYRQP (65 aa)) lie on the Cytoplasmic side of the membrane. Phosphothreonine is present on Thr-232. The chain crosses the membrane as a helical span at residues 270-290 (IIISIMLQLSQQLSGINAVFY). The important for selectivity against fructose stretch occupies residues 277 to 279 (QLS). D-glucose-binding positions include 280-281 (QQ) and Asn-286. The Extracellular segment spans residues 291–304 (YSTGIFKDAGVQEP). Residues 305–325 (VYATIGAGVVNTIFTVVSVFL) traverse the membrane as a helical segment. Residue Asn-315 participates in D-glucose binding. The Cytoplasmic portion of the chain corresponds to 326–331 (VERAGR). A helical transmembrane segment spans residues 332-352 (RTLHLIGLGGMAFCSILMTIS). Residues 353-363 (LLLKDNYSWMS) lie on the Extracellular side of the membrane. An N-linked (GlcNAc...) asparagine glycan is attached at Asn-358. The chain crosses the membrane as a helical span at residues 364–389 (FICIGAILVFVAFFEIGPGPIPWFIV). D-glucose-binding residues include Glu-378 and Trp-386. Topologically, residues 390–399 (AELFGQGPRP) are cytoplasmic. Residues 400–420 (AAMAVAGCSNWTSNFLVGLLF) traverse the membrane as a helical segment. Residues 421–429 (PSAAFYLGA) lie on the Extracellular side of the membrane. A helical membrane pass occupies residues 430-450 (YVFIVFTVFLVIFWVFTFFKV). Residues 451-494 (PETRGRTFEEITRAFEGQTQTGTRGEKGPIMEMNSIQPTKDTNA) are Cytoplasmic-facing. Positions 469–494 (TQTGTRGEKGPIMEMNSIQPTKDTNA) are disordered. Residues 484–494 (NSIQPTKDTNA) are compositionally biased toward polar residues. Residue Ser-485 is modified to Phosphoserine. Thr-492 is modified (phosphothreonine).

This sequence belongs to the major facilitator superfamily. Sugar transporter (TC 2.A.1.1) family. Glucose transporter subfamily. In terms of assembly, interacts with SMIM43; the interaction may promote SLC2A1-mediated glucose transport to meet the energy needs of mesendoderm differentiation.

The protein localises to the cell membrane. The protein resides in the perikaryon. Its subcellular location is the cell projection. The enzyme catalyses D-glucose(out) = D-glucose(in). The catalysed reaction is D-galactose(in) = D-galactose(out). With respect to regulation, deoxyglucose transport is inhibited by D-glucose, D-galactose and maltose. Galactose transport is inhibited by D-glucose and maltose. Functionally, facilitative glucose transporter. Can also mediate the uptake of various other monosaccharides across the cell membrane. Mediates the uptake of glucose, 2-deoxyglucose, galactose, mannose, xylose and fucose, and probably also dehydroascorbate. Does not mediate fructose transport. Required for mesendoderm differentiation. This Bos taurus (Bovine) protein is Solute carrier family 2, facilitated glucose transporter member 3.